Here is a 484-residue protein sequence, read N- to C-terminus: Glutamate--tRNA ligase (484 aa).

The 'HIGH' region motif lies at 11–21 (PSPTGYLHIGN). The short motif at 252–256 (KLSKR) is the 'KMSKS' region element. Lys255 serves as a coordination point for ATP.

Belongs to the class-I aminoacyl-tRNA synthetase family. Glutamate--tRNA ligase type 1 subfamily. In terms of assembly, monomer.

It localises to the cytoplasm. The enzyme catalyses tRNA(Glu) + L-glutamate + ATP = L-glutamyl-tRNA(Glu) + AMP + diphosphate. In terms of biological role, catalyzes the attachment of glutamate to tRNA(Glu) in a two-step reaction: glutamate is first activated by ATP to form Glu-AMP and then transferred to the acceptor end of tRNA(Glu). This is Glutamate--tRNA ligase from Staphylococcus saprophyticus subsp. saprophyticus (strain ATCC 15305 / DSM 20229 / NCIMB 8711 / NCTC 7292 / S-41).